The sequence spans 642 residues: Mediator of RNA polymerase II transcription subunit 17 (642 aa).

The interval 210–232 is disordered; the sequence is AEETGDEDTASSSNSSSSVSGNN. Positions 220-232 are enriched in low complexity; the sequence is SSSNSSSSVSGNN.

It belongs to the Mediator complex subunit 17 family. Component of the Mediator complex, which includes at least CDK8, MED4, MED6, MED11, MED14, MED17, MED18, MED20, MED21, MED22, MED27, MED28, MED30 and MED31. Interacts with Hsf.

Its subcellular location is the nucleus. The protein localises to the chromosome. Component of the Mediator complex, a coactivator involved in the regulated transcription of nearly all RNA polymerase II-dependent genes. Mediator functions as a bridge to convey information from gene-specific regulatory proteins to the basal RNA polymerase II transcription machinery. Mediator is recruited to promoters by direct interactions with regulatory proteins and serves as a scaffold for the assembly of a functional preinitiation complex with RNA polymerase II and the general transcription factors. Required for activated transcription of the MtnA, MtnB and MtnD genes. Negatively regulates sex comb development. The chain is Mediator of RNA polymerase II transcription subunit 17 (MED17) from Drosophila melanogaster (Fruit fly).